Reading from the N-terminus, the 146-residue chain is UPF0260 protein Swit_2819 (146 aa).

The protein belongs to the UPF0260 family.

The polypeptide is UPF0260 protein Swit_2819 (Rhizorhabdus wittichii (strain DSM 6014 / CCUG 31198 / JCM 15750 / NBRC 105917 / EY 4224 / RW1) (Sphingomonas wittichii)).